The sequence spans 443 residues: Chromosome partition protein MukF (443 aa).

A leucine-zipper region spans residues 209-237 (LDETSGNLRELQDTLNAAGDKLQAQLLRI).

Belongs to the MukF family. Interacts, and probably forms a ternary complex, with MukE and MukB via its C-terminal region. The complex formation is stimulated by calcium or magnesium. It is required for an interaction between MukE and MukB.

The protein localises to the cytoplasm. It is found in the nucleoid. Involved in chromosome condensation, segregation and cell cycle progression. May participate in facilitating chromosome segregation by condensation DNA from both sides of a centrally located replisome during cell division. Not required for mini-F plasmid partitioning. Probably acts via its interaction with MukB and MukE. Overexpression results in anucleate cells. It has a calcium binding activity. This Actinobacillus pleuropneumoniae serotype 3 (strain JL03) protein is Chromosome partition protein MukF.